We begin with the raw amino-acid sequence, 125 residues long: Small ribosomal subunit protein bS6 (125 aa).

This sequence belongs to the bacterial ribosomal protein bS6 family.

In terms of biological role, binds together with bS18 to 16S ribosomal RNA. This is Small ribosomal subunit protein bS6 (rpsF) from Pasteurella multocida (strain Pm70).